A 213-amino-acid chain; its full sequence is Phosphate-specific transport system accessory protein PhoU homolog 2 (213 aa).

This sequence belongs to the PhoU family. As to quaternary structure, homodimer.

The protein resides in the cytoplasm. Functionally, plays a role in the regulation of phosphate uptake. In this role, it may bind, possibly as a chaperone, to PhoR, PhoP or a PhoR-PhoP complex to promote dephosphorylation of phospho-PhoP, or inhibit formation of the PhoR-PhoP transitory complex. The chain is Phosphate-specific transport system accessory protein PhoU homolog 2 (phoU2) from Mycobacterium bovis (strain ATCC BAA-935 / AF2122/97).